The primary structure comprises 623 residues: Leucine aminopeptidase 2 (623 aa).

A peptide is bound by residues 136–138 and 261–266; these read QCE and PYGGME. Histidine 290 provides a ligand contact to Zn(2+). Glutamate 291 functions as the Proton acceptor in the catalytic mechanism. Histidine 294 and glutamate 313 together coordinate Zn(2+). Catalysis depends on tyrosine 391, which acts as the Proton donor.

Belongs to the peptidase M1 family. Requires Zn(2+) as cofactor.

The protein resides in the cytoplasm. Its subcellular location is the nucleus. The enzyme catalyses an epoxide + H2O = an ethanediol. Its function is as follows. Aminopeptidase that preferentially cleaves di- and tripeptides. Also has low epoxide hydrolase activity (in vitro). Can hydrolyze the epoxide leukotriene LTA(4) but it forms preferentially 5,6-dihydroxy-7,9,11,14-eicosatetraenoic acid rather than the cytokine leukotriene B(4) as the product compared to the homologous mammalian enzyme (in vitro). The polypeptide is Leucine aminopeptidase 2 (LKH1) (Candida albicans (strain SC5314 / ATCC MYA-2876) (Yeast)).